The primary structure comprises 661 residues: Pentatricopeptide repeat-containing protein At3g04750, mitochondrial (661 aa).

The N-terminal 18 residues, 1 to 18 (MCFVLLLRRGFRLFGTEC), are a transit peptide targeting the mitochondrion. PPR repeat units follow at residues 99–131 (NVFV…RVSP), 132–163 (DRQT…GCLS), 165–195 (GNYL…MPHP), 196–230 (DVSS…GIEP), 231–265 (DEYT…GPVY), 268–298 (NLIL…MKKK), 299–333 (DMRS…DLVS), 334–366 (WNSL…KVKP), 367–401 (DRVT…QLKG), 402–432 (DAFL…ATEK), 433–467 (DVAL…GVTP), 468–498 (NNVT…MKDK), and 504–539 (ETEH…PSQS). Positions 540 to 615 (MWGSILSACR…TAGYSSVVGV (76 aa)) are type E motif. The interval 616-647 (EGLHRFVAAEKQNHPRWTEIKRILQHLYNEMK) is type E(+) motif.

The protein belongs to the PPR family. PCMP-E subfamily.

It localises to the mitochondrion. This is Pentatricopeptide repeat-containing protein At3g04750, mitochondrial (PCMP-E81) from Arabidopsis thaliana (Mouse-ear cress).